A 237-amino-acid chain; its full sequence is UPF0174 protein YaaW (237 aa).

This sequence belongs to the UPF0174 family.

This Escherichia coli (strain K12) protein is UPF0174 protein YaaW (yaaW).